A 111-amino-acid chain; its full sequence is uncharacterized protein (111 aa).

A disordered region spans residues 66–94 (PVPTATPSLPRSGFTSSAKKIKESRKQKS). Residues 70-83 (ATPSLPRSGFTSSA) show a composition bias toward polar residues.

The protein resides in the plastid. The protein localises to the chloroplast. This is an uncharacterized protein from Chlamydomonas reinhardtii (Chlamydomonas smithii).